Consider the following 243-residue polypeptide: uncharacterized protein (243 aa).

This is an uncharacterized protein from Acidianus bottle-shaped virus (isolate Italy/Pozzuoli) (ABV).